A 364-amino-acid chain; its full sequence is Dihydroorotate dehydrogenase (quinone) (364 aa).

Residues 61 to 65 (AGFDK) and threonine 85 each bind FMN. Residue lysine 65 coordinates substrate. Substrate is bound at residue 110–114 (NRMGF). FMN contacts are provided by asparagine 139 and asparagine 170. Asparagine 170 provides a ligand contact to substrate. Residue serine 173 is the Nucleophile of the active site. A substrate-binding site is contributed by asparagine 175. FMN-binding residues include lysine 214 and alanine 242. Substrate is bound at residue 243–244 (NT). Residues glycine 266, glycine 295, and 316–317 (YS) each bind FMN.

Belongs to the dihydroorotate dehydrogenase family. Type 2 subfamily. In terms of assembly, monomer. FMN is required as a cofactor.

The protein resides in the cell membrane. The enzyme catalyses (S)-dihydroorotate + a quinone = orotate + a quinol. The protein operates within pyrimidine metabolism; UMP biosynthesis via de novo pathway; orotate from (S)-dihydroorotate (quinone route): step 1/1. Functionally, catalyzes the conversion of dihydroorotate to orotate with quinone as electron acceptor. The protein is Dihydroorotate dehydrogenase (quinone) of Rhodopseudomonas palustris (strain TIE-1).